A 64-amino-acid polypeptide reads, in one-letter code: Putative antitoxin VapB1 (64 aa).

Possibly the antitoxin component of a type II toxin-antitoxin (TA) system. Its cognate toxin is VapC1 (Potential). The sequence is that of Putative antitoxin VapB1 (vapB1) from Methanocaldococcus jannaschii (strain ATCC 43067 / DSM 2661 / JAL-1 / JCM 10045 / NBRC 100440) (Methanococcus jannaschii).